Reading from the N-terminus, the 518-residue chain is Histone deacetylase 1 (518 aa).

Residues 22-333 form a histone deacetylase region; sequence RRVCYFYDAE…WCYETGVALG (312 aa). The active-site Proton donor/acceptor is the histidine 153. Residues aspartate 188, histidine 190, and aspartate 276 each coordinate Zn(2+). Residues 387-518 form a disordered region; it reads HAPSVQFQER…QDQPSVHQKT (132 aa). Residues 401-412 show a composition bias toward acidic residues; that stretch reads ELPEQDEDQEDP. The span at 413-435 shows a compositional bias: basic and acidic residues; that stretch reads DERHHADSDVEMDDVKPLDDSGR. Positions 503–518 are enriched in polar residues; it reads DNSNKLQDQPSVHQKT.

Belongs to the histone deacetylase family. HD Type 1 subfamily. Interacts with TPR3. It depends on Zn(2+) as a cofactor. Expressed in roots and leaves.

The protein localises to the nucleus. It catalyses the reaction N(6)-acetyl-L-lysyl-[histone] + H2O = L-lysyl-[histone] + acetate. In terms of biological role, responsible for the deacetylation of lysine residues on the N-terminal part of the core histones (H2A, H2B, H3 and H4). Histone deacetylation gives a tag for epigenetic repression and plays an important role in transcriptional regulation, cell cycle progression and developmental events. Histone deacetylases act via the formation of large multiprotein complexes. Negatively regulates the expression of the NAC48/NAC6 gene that controls root growth in seedlings. Epigenetically represses the expression of NAC48/NAC6 by deacetylating 'Lys-9' (H3K9ac), 'Lys-14' (H3K14ac) and 'Lys-18' (H3K18ac) of histone H3, and 'Lys-5' (H4K5ac), 'Lys-12' (H4K12ac) and 'Lys-16' (H4K16ac) of histone H4. Functions in the regulation of gene expression in the whole genome. Acts as a chromatin remodeling regulator to promote the formation of a repressive chromatin state. Functions with MODD via its interaction with TPR3, to down-regulates the histone acetylation level at BZIP46 target genes. BZIP46 is a positive regulator of abscisic acid (ABA) signaling and drought stress tolerance. The sequence is that of Histone deacetylase 1 from Oryza sativa subsp. japonica (Rice).